We begin with the raw amino-acid sequence, 89 residues long: Small ribosomal subunit protein uS15 (89 aa).

The protein belongs to the universal ribosomal protein uS15 family. Part of the 30S ribosomal subunit. Forms a bridge to the 50S subunit in the 70S ribosome, contacting the 23S rRNA.

Functionally, one of the primary rRNA binding proteins, it binds directly to 16S rRNA where it helps nucleate assembly of the platform of the 30S subunit by binding and bridging several RNA helices of the 16S rRNA. Its function is as follows. Forms an intersubunit bridge (bridge B4) with the 23S rRNA of the 50S subunit in the ribosome. The chain is Small ribosomal subunit protein uS15 from Proteus mirabilis (strain HI4320).